Here is a 144-residue protein sequence, read N- to C-terminus: 6,7-dimethyl-8-ribityllumazine synthase (144 aa).

5-amino-6-(D-ribitylamino)uracil-binding positions include F21, 56–58 (AYE), and 80–82 (AVI). 85-86 (GT) is a (2S)-2-hydroxy-3-oxobutyl phosphate binding site. The Proton donor role is filled by H88. F113 is a 5-amino-6-(D-ribitylamino)uracil binding site. R127 contacts (2S)-2-hydroxy-3-oxobutyl phosphate.

It belongs to the DMRL synthase family. In terms of assembly, forms an icosahedral capsid composed of 60 subunits, arranged as a dodecamer of pentamers.

It carries out the reaction (2S)-2-hydroxy-3-oxobutyl phosphate + 5-amino-6-(D-ribitylamino)uracil = 6,7-dimethyl-8-(1-D-ribityl)lumazine + phosphate + 2 H2O + H(+). It participates in cofactor biosynthesis; riboflavin biosynthesis; riboflavin from 2-hydroxy-3-oxobutyl phosphate and 5-amino-6-(D-ribitylamino)uracil: step 1/2. In terms of biological role, catalyzes the formation of 6,7-dimethyl-8-ribityllumazine by condensation of 5-amino-6-(D-ribitylamino)uracil with 3,4-dihydroxy-2-butanone 4-phosphate. This is the penultimate step in the biosynthesis of riboflavin. This is 6,7-dimethyl-8-ribityllumazine synthase (ribH) from Photobacterium leiognathi.